The chain runs to 159 residues: Ribosomal RNA large subunit methyltransferase H (159 aa).

S-adenosyl-L-methionine is bound by residues Gly-108 and 127–132; that span reads FSKMTF.

It belongs to the RNA methyltransferase RlmH family. As to quaternary structure, homodimer.

It is found in the cytoplasm. The enzyme catalyses pseudouridine(1915) in 23S rRNA + S-adenosyl-L-methionine = N(3)-methylpseudouridine(1915) in 23S rRNA + S-adenosyl-L-homocysteine + H(+). Specifically methylates the pseudouridine at position 1915 (m3Psi1915) in 23S rRNA. This is Ribosomal RNA large subunit methyltransferase H from Clostridium acetobutylicum (strain ATCC 824 / DSM 792 / JCM 1419 / IAM 19013 / LMG 5710 / NBRC 13948 / NRRL B-527 / VKM B-1787 / 2291 / W).